The sequence spans 253 residues: Triosephosphate isomerase (253 aa).

9-11 contacts substrate; it reads NWK. Catalysis depends on His-96, which acts as the Electrophile. Residue Glu-169 is the Proton acceptor of the active site. Residues Gly-175, Ser-215, and 236–237 contribute to the substrate site; that span reads GG.

This sequence belongs to the triosephosphate isomerase family. As to quaternary structure, homodimer.

It localises to the cytoplasm. It catalyses the reaction D-glyceraldehyde 3-phosphate = dihydroxyacetone phosphate. It functions in the pathway carbohydrate biosynthesis; gluconeogenesis. Its pathway is carbohydrate degradation; glycolysis; D-glyceraldehyde 3-phosphate from glycerone phosphate: step 1/1. Its function is as follows. Involved in the gluconeogenesis. Catalyzes stereospecifically the conversion of dihydroxyacetone phosphate (DHAP) to D-glyceraldehyde-3-phosphate (G3P). This chain is Triosephosphate isomerase, found in Borrelia garinii subsp. bavariensis (strain ATCC BAA-2496 / DSM 23469 / PBi) (Borreliella bavariensis).